Consider the following 310-residue polypeptide: Protoheme IX farnesyltransferase (310 aa).

A run of 9 helical transmembrane segments spans residues 30–47 (VTTL…FGAA), 50–70 (GLPL…LVSG), 102–122 (LGHG…YLGL), 126–146 (WLTA…YTPL), 152–172 (ICTT…WTAI), 181–201 (VALF…IAWL), 228–248 (IVIY…LRFA), 251–271 (IYFL…LRMF), and 286–306 (ARQL…VMML).

The protein belongs to the UbiA prenyltransferase family. Protoheme IX farnesyltransferase subfamily.

It localises to the cell inner membrane. The enzyme catalyses heme b + (2E,6E)-farnesyl diphosphate + H2O = Fe(II)-heme o + diphosphate. Its pathway is porphyrin-containing compound metabolism; heme O biosynthesis; heme O from protoheme: step 1/1. Converts heme B (protoheme IX) to heme O by substitution of the vinyl group on carbon 2 of heme B porphyrin ring with a hydroxyethyl farnesyl side group. The protein is Protoheme IX farnesyltransferase of Koribacter versatilis (strain Ellin345).